Here is a 119-residue protein sequence, read N- to C-terminus: Large ribosomal subunit protein bL20 (119 aa).

The protein belongs to the bacterial ribosomal protein bL20 family.

Functionally, binds directly to 23S ribosomal RNA and is necessary for the in vitro assembly process of the 50S ribosomal subunit. It is not involved in the protein synthesizing functions of that subunit. The chain is Large ribosomal subunit protein bL20 from Bacillus velezensis (strain DSM 23117 / BGSC 10A6 / LMG 26770 / FZB42) (Bacillus amyloliquefaciens subsp. plantarum).